A 231-amino-acid polypeptide reads, in one-letter code: Flagellar L-ring protein (231 aa).

The first 18 residues, 1–18, serve as a signal peptide directing secretion; the sequence is MSRLLIVVSLSSAFALAG. C19 carries the N-palmitoyl cysteine lipid modification. C19 is lipidated: S-diacylglycerol cysteine.

This sequence belongs to the FlgH family. In terms of assembly, the basal body constitutes a major portion of the flagellar organelle and consists of four rings (L,P,S, and M) mounted on a central rod.

Its subcellular location is the cell outer membrane. It localises to the bacterial flagellum basal body. In terms of biological role, assembles around the rod to form the L-ring and probably protects the motor/basal body from shearing forces during rotation. In Stutzerimonas stutzeri (strain A1501) (Pseudomonas stutzeri), this protein is Flagellar L-ring protein.